The primary structure comprises 1159 residues: DNA-directed RNA polymerase subunit beta' (1159 aa).

Mg(2+) contacts are provided by D398, D400, and D402. Zn(2+) is bound by residues C741, C815, C822, and C825.

This sequence belongs to the RNA polymerase beta' chain family. As to quaternary structure, the RNAP catalytic core consists of 2 alpha, 1 beta, 1 beta' and 1 omega subunit. When a sigma factor is associated with the core the holoenzyme is formed, which can initiate transcription. It depends on Mg(2+) as a cofactor. Zn(2+) is required as a cofactor.

It catalyses the reaction RNA(n) + a ribonucleoside 5'-triphosphate = RNA(n+1) + diphosphate. Its function is as follows. DNA-dependent RNA polymerase catalyzes the transcription of DNA into RNA using the four ribonucleoside triphosphates as substrates. This chain is DNA-directed RNA polymerase subunit beta', found in Porphyromonas cangingivalis.